Reading from the N-terminus, the 205-residue chain is Nuclear transcription factor Y subunit C-6 (205 aa).

The disordered stretch occupies residues 1–24 (MEPKSTTPPPPPPPPVLGAPVPYP).

This sequence belongs to the NFYC/HAP5 subunit family. In terms of assembly, heterotrimeric transcription factor composed of three components, NF-YA, NF-YB and NF-YC. NF-YB and NF-YC must interact and dimerize for NF-YA association and DNA binding. Interacts with NFYB2. Interacts with NFYB8, NFYB10 and HD5/NFYB11.

Its subcellular location is the nucleus. It localises to the cytoplasm. Functionally, component of the NF-Y/HAP transcription factor complex. The polypeptide is Nuclear transcription factor Y subunit C-6 (Oryza sativa subsp. japonica (Rice)).